Reading from the N-terminus, the 660-residue chain is Probable cation-transporting P-type ATPase J (660 aa).

The next 5 membrane-spanning stretches (helical) occupy residues 33–53 (WAALALGLFSAGLLTQLCGAP), 60–80 (LFLACYATGGWEPGLAGLQAL), 94–114 (AAIGAAAIGQIAEGALLIVIF), 261–281 (IGMVAVTLAVFAVPPLWGETL), and 292–312 (MIVASPCAVVLATMPPLLAAI). Aspartate 340 functions as the 4-aspartylphosphate intermediate in the catalytic mechanism. Residues aspartate 544 and aspartate 548 each coordinate Mg(2+). Residues 598–618 (IVVANLIVAVTFIAGLVVWDL) traverse the membrane as a helical segment.

It belongs to the cation transport ATPase (P-type) (TC 3.A.3) family. Type IB subfamily.

The protein localises to the cell membrane. The catalysed reaction is ATP + H2O = ADP + phosphate + H(+). The chain is Probable cation-transporting P-type ATPase J (ctpJ) from Mycobacterium tuberculosis (strain CDC 1551 / Oshkosh).